The primary structure comprises 354 residues: Arginase-2, mitochondrial (354 aa).

Residues 1–22 (MFLRSSASRLLHGQIPCVLTRS) constitute a mitochondrion transit peptide. Positions 120, 143, 145, and 147 each coordinate Mn(2+). Substrate-binding positions include 145–149 (HADIN), 156–158 (SGN), and E202. 2 residues coordinate Mn(2+): D251 and D253. Residues T265 and E296 each contribute to the substrate site.

Belongs to the arginase family. Homotrimer. Mn(2+) is required as a cofactor.

It is found in the mitochondrion. It carries out the reaction L-arginine + H2O = urea + L-ornithine. It functions in the pathway nitrogen metabolism; urea cycle; L-ornithine and urea from L-arginine: step 1/1. May play a role in the regulation of extra-urea cycle arginine metabolism and also in down-regulation of nitric oxide synthesis. Extrahepatic arginase functions to regulate L-arginine bioavailability to nitric oxid synthase (NOS). Arginine metabolism is a critical regulator of innate and adaptive immune responses. Seems to be involved in negative regulation of the survival capacity of activated CD4(+) and CD8(+) T cells. May suppress inflammation-related signaling in asthmatic airway epithelium. May contribute to the immune evasion of H.pylori by restricting M1 macrophage activation and polyamine metabolism. May play a role in promoting prenatal immune suppression. Regulates RPS6KB1 signaling, which promotes endothelial cell senescence and inflammation and implicates NOS3/eNOS dysfunction. Can inhibit endothelial autophagy independently of its enzymatic activity implicating mTORC2 signaling. Involved in vascular smooth muscle cell senescence and apoptosis independently of its enzymatic activity. This chain is Arginase-2, mitochondrial (Arg2), found in Mus musculus (Mouse).